The chain runs to 541 residues: Protein wntless homolog (541 aa).

The Cytoplasmic portion of the chain corresponds to 1 to 15; it reads MAGAIIENMSTKKLC. A helical transmembrane segment spans residues 16-36; the sequence is IVGGILLVFQIVAFLVGGLIA. Over 37-232 the chain is Lumenal; the sequence is PAPTTAVPYT…GIHQNGGFTK (196 aa). Residues 101 to 232 form an interaction with Wnt proteins region; that stretch reads MEMSPWFQFM…GIHQNGGFTK (132 aa). A helical membrane pass occupies residues 233–253; it reads VWFAMKTFLTPSIFIIMVWYW. Residues 254–268 are Cytoplasmic-facing; sequence RRITMMSRPPVLLEK. A helical transmembrane segment spans residues 269–289; it reads VIFALGISMTFINIPVEWFSI. Over 290–303 the chain is Lumenal; the sequence is GFDWTWMLLFGDIR. A helical transmembrane segment spans residues 304 to 324; that stretch reads QGIFYAMLLSFWIIFCGEHMM. Residues 325–331 lie on the Cytoplasmic side of the membrane; sequence DQHERNH. The helical transmembrane segment at 332 to 352 threads the bilayer; sequence IAGYWKQVGPIAVGSFCLFIF. The Lumenal portion of the chain corresponds to 353–380; that stretch reads DMCERGVQLTNPFYSIWTTDVGTELAMA. A helical membrane pass occupies residues 381-401; the sequence is FIIVAGICLCLYFLFLCFMVF. Residues 402–431 are Cytoplasmic-facing; sequence QVFRNISGKQSSLPAMSKVRRLHYEGLIFR. A helical membrane pass occupies residues 432 to 452; it reads FKFLMLITLACAAMTVIFFIV. At 453–471 the chain is on the lumenal side; it reads SQVSEGHWKWGGVTVQVSS. Residues 472–492 form a helical membrane-spanning segment; it reads AFFTGIYGMWNLYVFALMFLY. Residues 493 to 541 lie on the Cytoplasmic side of the membrane; sequence APSHKNYGEDQSNGDLGVHSGEELQLTTTITHVDGPTEIYKLTRKEAQE.

This sequence belongs to the wntless family. In terms of assembly, interacts with WNT3A. Interacts with WNT1, WNT3 and WNT5. In terms of processing, N-glycosylated. As to expression, expressed in the brain, skeletal muscle, heart muscle, lung, gut, liver, and kidney (at protein level). In the brain, expressed in the cortex, striatum, hippocampus and to a lesser extent in the cerebellum (at protein level). Expressed in kidney, lung, skin, intestine, brain, spinal cord, skeleton, eyes, excretion glands, tooth and palatal shelves. In the cerebellum, expressed in Purkinje cells.

The protein resides in the golgi apparatus membrane. It localises to the cytoplasmic vesicle membrane. Its subcellular location is the cell membrane. It is found in the endoplasmic reticulum membrane. The protein localises to the early endosome membrane. In terms of biological role, regulates Wnt proteins sorting and secretion in a feedback regulatory mechanism. This reciprocal interaction plays a key role in the regulation of expression, subcellular location, binding and organelle-specific association of Wnt proteins. Also plays an important role in establishment of the anterior-posterior body axis formation during development. In Mus musculus (Mouse), this protein is Protein wntless homolog (Wls).